Here is a 364-residue protein sequence, read N- to C-terminus: Aminomethyltransferase (364 aa).

The protein belongs to the GcvT family. As to quaternary structure, the glycine cleavage system is composed of four proteins: P, T, L and H.

It carries out the reaction N(6)-[(R)-S(8)-aminomethyldihydrolipoyl]-L-lysyl-[protein] + (6S)-5,6,7,8-tetrahydrofolate = N(6)-[(R)-dihydrolipoyl]-L-lysyl-[protein] + (6R)-5,10-methylene-5,6,7,8-tetrahydrofolate + NH4(+). In terms of biological role, the glycine cleavage system catalyzes the degradation of glycine. This is Aminomethyltransferase from Shewanella baltica (strain OS223).